We begin with the raw amino-acid sequence, 233 residues long: uncharacterized protein (233 aa).

Belongs to the LutC/YkgG family.

This is an uncharacterized protein from Neisseria meningitidis serogroup B (strain ATCC BAA-335 / MC58).